The primary structure comprises 1293 residues: Period circadian protein homolog 1 (1293 aa).

The segment at 1 to 134 (MSGPLEGADG…SSEQSARART (134 aa)) is disordered. The segment at 1-151 (MSGPLEGADG…LRELKLRLPP (151 aa)) is interaction with BTRC. Low complexity-rich tracts occupy residues 48 to 57 (NSNGSSGNES) and 64 to 115 (GASQ…ASSE). Polar residues predominate over residues 116–132 (QDNPSTSGCSSEQSARA). The residue at position 121 (Thr121) is a Phosphothreonine; by CSNK1E. Phosphoserine; by CSNK1E occurs at positions 122 and 126. Positions 138–147 (LMTALRELKL) match the Nuclear export signal 1 motif. PAS domains lie at 208–275 (ITSE…PSRL) and 348–414 (YEAP…KILQ). The PAC domain occupies 422–465 (HSPIRFCARNGEYVTMDTSWAGFVHPWSRKVAFVLGRHKVRTAP). A Nuclear export signal 2 motif is present at residues 489 to 498 (LSEQIHRLLL). 2 disordered regions span residues 509 to 544 (LCGV…PAPV) and 647 to 697 (TKRK…KEPV). 2 stretches are compositionally biased toward low complexity: residues 513–533 (GPLM…SNGG) and 652–661 (ASSSCTASSA). The segment at 596–814 (ELEVAPAPDQ…GLDTSSVAPS (219 aa)) is required for phosphorylation by CSNK1E. A phosphoserine mark is found at Ser660, Ser662, and Ser703. 4 disordered regions span residues 748–771 (GLAP…APDA), 808–870 (TSSV…PPAT), 935–1094 (SQAP…SKYF), and 1204–1293 (SVQD…NGTS). The segment covering 750-768 (APGPAPSPAPSPTVAPDPA) has biased composition (pro residues). Ser814 carries the post-translational modification Phosphoserine. Positions 823–839 (IPSGRRHHCRSKAKRSR) match the Nuclear localization signal motif. Over residues 826–843 (GRRHHCRSKAKRSRHHQT) the composition is skewed to basic residues. Composition is skewed to pro residues over residues 856-870 (SPVP…PPAT) and 952-962 (PSLPPPPPSPP). The segment covering 969-982 (LFNSRCSSPLQLNL) has biased composition (polar residues). Residues Ser975 and Ser976 each carry the phosphoserine modification. The Nuclear export signal 3 signature appears at 978 to 985 (LQLNLLQL). Over residues 1032-1058 (LSGSSDLLELLLQEDSRSGTGSAASGS) the composition is skewed to low complexity. An LXXLL motif is present at residues 1039–1043 (LELLL). Residues 1059–1073 (LGSGLGSGSGSGSHE) show a composition bias toward gly residues. The segment covering 1074-1091 (GGSTSASITRSSQSSHTS) has biased composition (low complexity). A CRY binding domain region spans residues 1145–1293 (SRDAASVLKQ…ALPAEENGTS (149 aa)). Positions 1232–1250 (GEGGGVGGGGGGVGGGGGD) are enriched in gly residues. Over residues 1255 to 1269 (AQTQIGTKGSSSQDS) the composition is skewed to polar residues.

As to quaternary structure, homodimer. Component of the circadian core oscillator, which includes the CRY proteins, CLOCK or NPAS2, BMAL1 or BMAL2, CSNK1D and/or CSNK1E, TIMELESS, and the PER proteins. Interacts directly with TIMELESS, PER2, PER3, CRY1 and CRY2. Interacts with BMAL1 and CLOCK. Interacts with GPRASP1. Interacts (phosphorylated) with BTRC and FBXW11; the interactions trigger proteasomal degradation. Interacts with NONO and WDR5. Interacts with SFPQ. Interacts with USP2. Interacts with HNF4A. In terms of processing, phosphorylated on serine residues by CSNK1D, CSNK1E and probably also by CSNK1G2. Phosphorylation by CSNK1D or CSNK1E promotes nuclear location of PER proteins as well as ubiquitination and subsequent degradation. May be dephosphorylated by PP1. Post-translationally, ubiquitinated; requires phosphorylation by CSNK1E and interaction with BTRC and FBXW11. Deubiquitinated by USP2. In terms of tissue distribution, expressed in pancreas. In the CNS, highly expressed in the SCN, internal granular layer of granular cells of the olfactory bulb, tuberculum olfactorium, piriform cortex, gyrus dentatus of the hippocampus, cerebellum, pars tuberalis/median eminence, and pituitary, and moderately in the tenia tecta, caudate putamen, accumbens nucleus, spinal cord, superior and inferior colliculus and pineal gland.

The protein resides in the nucleus. The protein localises to the cytoplasm. Transcriptional repressor which forms a core component of the circadian clock. The circadian clock, an internal time-keeping system, regulates various physiological processes through the generation of approximately 24 hour circadian rhythms in gene expression, which are translated into rhythms in metabolism and behavior. It is derived from the Latin roots 'circa' (about) and 'diem' (day) and acts as an important regulator of a wide array of physiological functions including metabolism, sleep, body temperature, blood pressure, endocrine, immune, cardiovascular, and renal function. Consists of two major components: the central clock, residing in the suprachiasmatic nucleus (SCN) of the brain, and the peripheral clocks that are present in nearly every tissue and organ system. Both the central and peripheral clocks can be reset by environmental cues, also known as Zeitgebers (German for 'timegivers'). The predominant Zeitgeber for the central clock is light, which is sensed by retina and signals directly to the SCN. The central clock entrains the peripheral clocks through neuronal and hormonal signals, body temperature and feeding-related cues, aligning all clocks with the external light/dark cycle. Circadian rhythms allow an organism to achieve temporal homeostasis with its environment at the molecular level by regulating gene expression to create a peak of protein expression once every 24 hours to control when a particular physiological process is most active with respect to the solar day. Transcription and translation of core clock components (CLOCK, NPAS2, BMAL1, BMAL2, PER1, PER2, PER3, CRY1 and CRY2) plays a critical role in rhythm generation, whereas delays imposed by post-translational modifications (PTMs) are important for determining the period (tau) of the rhythms (tau refers to the period of a rhythm and is the length, in time, of one complete cycle). A diurnal rhythm is synchronized with the day/night cycle, while the ultradian and infradian rhythms have a period shorter and longer than 24 hours, respectively. Disruptions in the circadian rhythms contribute to the pathology of cardiovascular diseases, cancer, metabolic syndromes and aging. A transcription/translation feedback loop (TTFL) forms the core of the molecular circadian clock mechanism. Transcription factors, CLOCK or NPAS2 and BMAL1 or BMAL2, form the positive limb of the feedback loop, act in the form of a heterodimer and activate the transcription of core clock genes and clock-controlled genes (involved in key metabolic processes), harboring E-box elements (5'-CACGTG-3') within their promoters. The core clock genes: PER1/2/3 and CRY1/2 which are transcriptional repressors form the negative limb of the feedback loop and interact with the CLOCK|NPAS2-BMAL1|BMAL2 heterodimer inhibiting its activity and thereby negatively regulating their own expression. This heterodimer also activates nuclear receptors NR1D1/2 and RORA/B/G, which form a second feedback loop and which activate and repress BMAL1 transcription, respectively. Regulates circadian target genes expression at post-transcriptional levels, but may not be required for the repression at transcriptional level. Controls PER2 protein decay. Represses CRY2 preventing its repression on CLOCK/BMAL1 target genes such as FXYD5 and SCNN1A in kidney and PPARA in liver. Besides its involvement in the maintenance of the circadian clock, has an important function in the regulation of several processes. Participates in the repression of glucocorticoid receptor NR3C1/GR-induced transcriptional activity by reducing the association of NR3C1/GR to glucocorticoid response elements (GREs) by BMAL1:CLOCK. Plays a role in the modulation of the neuroinflammatory state via the regulation of inflammatory mediators release, such as CCL2 and IL6. In spinal astrocytes, negatively regulates the MAPK14/p38 and MAPK8/JNK MAPK cascades as well as the subsequent activation of NFkappaB. Coordinately regulates the expression of multiple genes that are involved in the regulation of renal sodium reabsorption. Can act as gene expression activator in a gene and tissue specific manner, in kidney enhances WNK1 and SLC12A3 expression in collaboration with CLOCK. Modulates hair follicle cycling. Represses the CLOCK-BMAL1 induced transcription of BHLHE40/DEC1. This chain is Period circadian protein homolog 1, found in Rattus norvegicus (Rat).